The sequence spans 245 residues: Carboxymethylenebutenolidase homolog (245 aa).

Residue Ala-2 is modified to N-acetylalanine. Catalysis depends on residues Cys-132, Asp-179, and His-212. Ser-223 bears the Phosphoserine mark.

This sequence belongs to the dienelactone hydrolase family.

It is found in the cytoplasm. It localises to the cytosol. Functionally, cysteine hydrolase. The chain is Carboxymethylenebutenolidase homolog (Cmbl) from Rattus norvegicus (Rat).